A 479-amino-acid polypeptide reads, in one-letter code: FK506-binding protein 4 (479 aa).

3 disordered regions span residues 39–106 (IDPD…ARKL), 141–162 (VKGK…EGLD), and 205–367 (GNYV…KTTG). Composition is skewed to acidic residues over residues 40 to 49 (DPDEAPEFDD), 68 to 93 (LDEE…DEEV), 148 to 162 (TDDD…EGLD), and 214 to 256 (PRDD…DLDG). Basic and acidic residues-rich tracts occupy residues 272-299 (APKL…DKAK), 325-334 (AKPEQKETKK), and 348-364 (SKER…KAEK). The PPIase FKBP-type domain occupies 393–479 (GNTVAMRYIG…IFDVKLLEIK (87 aa)).

This sequence belongs to the FKBP-type PPIase family. FKBP3/4 subfamily. In terms of assembly, binds to histones H3 and H4.

It localises to the nucleus. It catalyses the reaction [protein]-peptidylproline (omega=180) = [protein]-peptidylproline (omega=0). Its activity is regulated as follows. Inhibited by both FK506 and rapamycin. PPIase that acts as a histone chaperone. Histone proline isomerase that increases the rate of cis-trans isomerization at prolines on the histone H3 N-terminal tail. Proline isomerization influences H3 methylation thereby regulating gene expression. The protein is FK506-binding protein 4 (fpr4) of Emericella nidulans (strain FGSC A4 / ATCC 38163 / CBS 112.46 / NRRL 194 / M139) (Aspergillus nidulans).